The chain runs to 363 residues: UDP-N-acetylglucosamine--N-acetylmuramyl-(pentapeptide) pyrophosphoryl-undecaprenol N-acetylglucosamine transferase (363 aa).

UDP-N-acetyl-alpha-D-glucosamine is bound by residues 10-12 (TAG), asparagine 124, arginine 161, serine 195, and glutamine 291.

Belongs to the glycosyltransferase 28 family. MurG subfamily.

Its subcellular location is the cell membrane. It carries out the reaction di-trans,octa-cis-undecaprenyl diphospho-N-acetyl-alpha-D-muramoyl-L-alanyl-D-glutamyl-meso-2,6-diaminopimeloyl-D-alanyl-D-alanine + UDP-N-acetyl-alpha-D-glucosamine = di-trans,octa-cis-undecaprenyl diphospho-[N-acetyl-alpha-D-glucosaminyl-(1-&gt;4)]-N-acetyl-alpha-D-muramoyl-L-alanyl-D-glutamyl-meso-2,6-diaminopimeloyl-D-alanyl-D-alanine + UDP + H(+). The protein operates within cell wall biogenesis; peptidoglycan biosynthesis. Functionally, cell wall formation. Catalyzes the transfer of a GlcNAc subunit on undecaprenyl-pyrophosphoryl-MurNAc-pentapeptide (lipid intermediate I) to form undecaprenyl-pyrophosphoryl-MurNAc-(pentapeptide)GlcNAc (lipid intermediate II). The sequence is that of UDP-N-acetylglucosamine--N-acetylmuramyl-(pentapeptide) pyrophosphoryl-undecaprenol N-acetylglucosamine transferase from Streptomyces avermitilis (strain ATCC 31267 / DSM 46492 / JCM 5070 / NBRC 14893 / NCIMB 12804 / NRRL 8165 / MA-4680).